The primary structure comprises 76 residues: Exodeoxyribonuclease 7 small subunit (76 aa).

The protein belongs to the XseB family. As to quaternary structure, heterooligomer composed of large and small subunits.

Its subcellular location is the cytoplasm. The enzyme catalyses Exonucleolytic cleavage in either 5'- to 3'- or 3'- to 5'-direction to yield nucleoside 5'-phosphates.. Functionally, bidirectionally degrades single-stranded DNA into large acid-insoluble oligonucleotides, which are then degraded further into small acid-soluble oligonucleotides. The sequence is that of Exodeoxyribonuclease 7 small subunit from Methylococcus capsulatus (strain ATCC 33009 / NCIMB 11132 / Bath).